Consider the following 357-residue polypeptide: Arginine kinase (357 aa).

The 83-residue stretch at 9-91 (KLEAGFKKLQ…FNPIIEDYHE (83 aa)) folds into the Phosphagen kinase N-terminal domain. Residue 64 to 66 (GVG) participates in L-arginine binding. The Phosphagen kinase C-terminal domain occupies 119 to 356 (YVVSTHVRCG…LEMIKMEEAA (238 aa)). Residues 122–126 (STHVR) and histidine 185 contribute to the ATP site. Glutamate 225 is a binding site for L-arginine. An ATP-binding site is contributed by arginine 229. Residue cysteine 271 coordinates L-arginine. Residues 280-284 (RASVH) and 309-314 (RGTRGE) each bind ATP.

Belongs to the ATP:guanido phosphotransferase family.

It carries out the reaction L-arginine + ATP = N(omega)-phospho-L-arginine + ADP + H(+). Functionally, catalyzes the reversible transfer of high energy ATP gamma-phosphate group to L-arginine. This Polybetes pythagoricus (South American huntsman spider) protein is Arginine kinase.